A 982-amino-acid polypeptide reads, in one-letter code: Glycine dehydrogenase (decarboxylating) (982 aa).

Position 721 is an N6-(pyridoxal phosphate)lysine (K721).

Belongs to the GcvP family. In terms of assembly, the glycine cleavage system is composed of four proteins: P, T, L and H. Pyridoxal 5'-phosphate is required as a cofactor.

It carries out the reaction N(6)-[(R)-lipoyl]-L-lysyl-[glycine-cleavage complex H protein] + glycine + H(+) = N(6)-[(R)-S(8)-aminomethyldihydrolipoyl]-L-lysyl-[glycine-cleavage complex H protein] + CO2. The glycine cleavage system catalyzes the degradation of glycine. The P protein binds the alpha-amino group of glycine through its pyridoxal phosphate cofactor; CO(2) is released and the remaining methylamine moiety is then transferred to the lipoamide cofactor of the H protein. The protein is Glycine dehydrogenase (decarboxylating) of Prochlorococcus marinus (strain MIT 9303).